A 171-amino-acid chain; its full sequence is bZIP transcription factor 2 (171 aa).

Residues 1 to 24 (MASSSSTYRSSSSSDGGNNNPSDS) show a composition bias toward low complexity. Residues 1-54 (MASSSSTYRSSSSSDGGNNNPSDSVVTVDERKRKRMLSNRESARRSRMRKQKHV) are disordered. Residues 29–92 (DERKRKRMLS…MKIQAENSVL (64 aa)) enclose the bZIP domain. The basic motif stretch occupies residues 31-52 (RKRKRMLSNRESARRSRMRKQK). The leucine-zipper stretch occupies residues 57–71 (LTAQINQLSNDNRQI).

As to quaternary structure, forms heterodimers with BZIP9, BZIP10, BZIP25 and BZIP63. Component of a ternary complex composed of BZIP2-BZIP63 heterodimer and KIN10.

It localises to the nucleus. Its function is as follows. Transcription factor that binds to specific DNA sequences in target gene promoters. BZIP2-BZIP63-KIN10 complex binds to the ETFQO promoter to up-regulate its transcription. The protein is bZIP transcription factor 2 of Arabidopsis thaliana (Mouse-ear cress).